An 851-amino-acid polypeptide reads, in one-letter code: Transcriptional regulator RFX1 (851 aa).

Polar residues-rich tracts occupy residues 1-11 (MSSDQTPQNRN) and 20-34 (PRLQ…STGP). 3 disordered regions span residues 1–121 (MSSD…EPHP), 134–170 (QSQF…PQTY), and 195–230 (HEAS…TGEN). A compositionally biased stretch (basic and acidic residues) spans 38–53 (QQRERSQEQESDHEHQ). A compositionally biased stretch (low complexity) spans 54-84 (QAQQHLHQFQQSNLTPSTTAFPSSTSIPTFS). The span at 85–114 (KQDQGYHNQFSSPQSSYRKIGNFAQSSNAP) shows a compositional bias: polar residues. The segment covering 141–170 (YSSPYIGQSQSQSQSQSQAQPQPHPQPQTY) has biased composition (low complexity). Polar residues predominate over residues 199–211 (SADNDSATNITTP). Positions 282–357 (GMVWLLNSCD…YHYCGIKLTG (76 aa)) form a DNA-binding region, RFX-type winged-helix. Disordered regions lie at residues 368–411 (YQQK…SVSY) and 783–806 (PPSL…TGTQ). The span at 384 to 393 (AQVGSSTSSA) shows a compositional bias: polar residues. A compositionally biased stretch (low complexity) spans 783–797 (PPSLSSLPQTQQQNP).

The protein belongs to the RFX family.

The protein localises to the nucleus. Functionally, transcription factor involved in DNA damage responses, morphogenesis, and virulence. This Candida albicans (strain SC5314 / ATCC MYA-2876) (Yeast) protein is Transcriptional regulator RFX1 (RFX1).